Consider the following 533-residue polypeptide: Apolipoprotein N-acyltransferase (533 aa).

A run of 6 helical transmembrane segments spans residues 17 to 37 (ALLA…FGFF), 74 to 94 (WLFG…ALLI), 105 to 125 (LAIL…AVLA), 127 to 147 (LLWS…GLLE), 178 to 198 (VIGV…PALL), and 205 to 225 (VPGI…GYYA). The 251-residue stretch at 245-495 (VQPAIDQEAK…QGFVDSTLSG (251 aa)) folds into the CN hydrolase domain. Residue Glu-290 is the Proton acceptor of the active site. The active site involves Lys-354. The active-site Nucleophile is the Cys-407. A helical transmembrane segment spans residues 509–529 (YFWLIIGIVGMIAVISRMGFI).

The protein belongs to the CN hydrolase family. Apolipoprotein N-acyltransferase subfamily.

The protein resides in the cell inner membrane. It catalyses the reaction N-terminal S-1,2-diacyl-sn-glyceryl-L-cysteinyl-[lipoprotein] + a glycerophospholipid = N-acyl-S-1,2-diacyl-sn-glyceryl-L-cysteinyl-[lipoprotein] + a 2-acyl-sn-glycero-3-phospholipid + H(+). It functions in the pathway protein modification; lipoprotein biosynthesis (N-acyl transfer). Catalyzes the phospholipid dependent N-acylation of the N-terminal cysteine of apolipoprotein, the last step in lipoprotein maturation. This is Apolipoprotein N-acyltransferase from Rhizobium rhizogenes (strain K84 / ATCC BAA-868) (Agrobacterium radiobacter).